A 662-amino-acid chain; its full sequence is UvrABC system protein B (662 aa).

A Helicase ATP-binding domain is found at 25–182 (KGIEKREKFQ…KKLVEIQYER (158 aa)). Residue 38–45 (GVTGSGKT) participates in ATP binding. Positions 91–114 (YYDYYQPEAYVAQSDTYIEKDASI) match the Beta-hairpin motif. The region spanning 429–595 (QIDDLYTSIQ…TIIKDIREVI (167 aa)) is the Helicase C-terminal domain. The UVR domain occupies 622-657 (DKLIEKYEEEMKEAAQNLQFEKAAHLRDVIYKLKKD).

This sequence belongs to the UvrB family. As to quaternary structure, forms a heterotetramer with UvrA during the search for lesions. Interacts with UvrC in an incision complex.

The protein localises to the cytoplasm. The UvrABC repair system catalyzes the recognition and processing of DNA lesions. A damage recognition complex composed of 2 UvrA and 2 UvrB subunits scans DNA for abnormalities. Upon binding of the UvrA(2)B(2) complex to a putative damaged site, the DNA wraps around one UvrB monomer. DNA wrap is dependent on ATP binding by UvrB and probably causes local melting of the DNA helix, facilitating insertion of UvrB beta-hairpin between the DNA strands. Then UvrB probes one DNA strand for the presence of a lesion. If a lesion is found the UvrA subunits dissociate and the UvrB-DNA preincision complex is formed. This complex is subsequently bound by UvrC and the second UvrB is released. If no lesion is found, the DNA wraps around the other UvrB subunit that will check the other stand for damage. This chain is UvrABC system protein B, found in Clostridium botulinum (strain Kyoto / Type A2).